A 140-amino-acid chain; its full sequence is Organic hydroperoxide resistance protein-like (140 aa).

It belongs to the OsmC/Ohr family.

The sequence is that of Organic hydroperoxide resistance protein-like from Staphylococcus aureus (strain MSSA476).